Reading from the N-terminus, the 130-residue chain is MSGRGKQGGKARAKAKSRSSRAGLQFPVGRVHRLLRKGNYAERVGAGAPVYLAAVLEYLTAEILELAGNAARDNKKTRIIPRHLQLAVRNDEELNKLLGGVTIAQGGVLPNIQAVLLPKKTESHKPGKNK.

The segment at 1-22 (MSGRGKQGGKARAKAKSRSSRA) is disordered. Serine 2 carries the N-acetylserine modification. The residue at position 2 (serine 2) is a Phosphoserine; by RPS6KA5. Arginine 4 is modified (citrulline; alternate). Position 4 is a symmetric dimethylarginine; by PRMT5; alternate (arginine 4). Lysine 6 carries the N6-(2-hydroxyisobutyryl)lysine modification. The span at 7–19 (QGGKARAKAKSRS) shows a compositional bias: basic residues. Lysine 10 carries the N6-(2-hydroxyisobutyryl)lysine; alternate modification. Residues lysine 10 and lysine 14 each carry the N6-(beta-hydroxybutyryl)lysine; alternate modification. N6-lactoyllysine; alternate is present on lysine 10. Lysine 10 is subject to N6-succinyllysine; alternate. Lysine 14 participates in a covalent cross-link: Glycyl lysine isopeptide (Lys-Gly) (interchain with G-Cter in ubiquitin); alternate. A Glycyl lysine isopeptide (Lys-Gly) (interchain with G-Cter in ubiquitin) cross-link involves residue lysine 16. Position 37 is an N6-(2-hydroxyisobutyryl)lysine; alternate (lysine 37). Lysine 37 is modified (N6-(beta-hydroxybutyryl)lysine; alternate). The residue at position 37 (lysine 37) is an N6-crotonyllysine; alternate. Residues lysine 75 and lysine 76 each carry the N6-(2-hydroxyisobutyryl)lysine modification. Lysine 96 is modified (N6-(2-hydroxyisobutyryl)lysine; alternate). Lysine 96 bears the N6-(beta-hydroxybutyryl)lysine; alternate mark. At lysine 96 the chain carries N6-succinyllysine; alternate. The residue at position 96 (lysine 96) is an N6-glutaryllysine; alternate. Glutamine 105 carries the post-translational modification N5-methylglutamine. Lysine 119 bears the N6-(2-hydroxyisobutyryl)lysine; alternate mark. Lysine 119 is modified (N6-(beta-hydroxybutyryl)lysine; alternate). Lysine 119 and lysine 120 each carry N6-crotonyllysine; alternate. An N6-glutaryllysine; alternate mark is found at lysine 119 and lysine 120. A Glycyl lysine isopeptide (Lys-Gly) (interchain with G-Cter in ubiquitin); alternate cross-link involves residue lysine 120. Threonine 121 is modified (phosphothreonine; by DCAF1).

Belongs to the histone H2A family. As to quaternary structure, the nucleosome is a histone octamer containing two molecules each of H2A, H2B, H3 and H4 assembled in one H3-H4 heterotetramer and two H2A-H2B heterodimers. The octamer wraps approximately 147 bp of DNA. Deiminated on Arg-4 in granulocytes upon calcium entry. Post-translationally, monoubiquitination of Lys-120 (H2AK119Ub) by RING1, TRIM37 and RNF2/RING2 complex gives a specific tag for epigenetic transcriptional repression and participates in X chromosome inactivation of female mammals. It is involved in the initiation of both imprinted and random X inactivation. Ubiquitinated H2A is enriched in inactive X chromosome chromatin. Ubiquitination of H2A functions downstream of methylation of 'Lys-27' of histone H3 (H3K27me). H2AK119Ub by RNF2/RING2 can also be induced by ultraviolet and may be involved in DNA repair. Monoubiquitination of Lys-120 (H2AK119Ub) by TRIM37 may promote transformation of cells in a number of breast cancers. Following DNA double-strand breaks (DSBs), it is ubiquitinated through 'Lys-63' linkage of ubiquitin moieties by the E2 ligase UBE2N and the E3 ligases RNF8 and RNF168, leading to the recruitment of repair proteins to sites of DNA damage. Ubiquitination at Lys-14 and Lys-16 (H2AK13Ub and H2AK15Ub, respectively) in response to DNA damage is initiated by RNF168 that mediates monoubiquitination at these 2 sites, and 'Lys-63'-linked ubiquitin are then conjugated to monoubiquitin; RNF8 is able to extend 'Lys-63'-linked ubiquitin chains in vitro. Deubiquitinated by USP51 at Lys-14 and Lys-16 (H2AK13Ub and H2AK15Ub, respectively) after damaged DNA is repaired. H2AK119Ub and ionizing radiation-induced 'Lys-63'-linked ubiquitination (H2AK13Ub and H2AK15Ub) are distinct events. In terms of processing, phosphorylation on Ser-2 (H2AS1ph) is enhanced during mitosis. Phosphorylation on Ser-2 by RPS6KA5/MSK1 directly represses transcription. Acetylation of H3 inhibits Ser-2 phosphorylation by RPS6KA5/MSK1. Phosphorylation at Thr-121 (H2AT120ph) by DCAF1 is present in the regulatory region of many tumor suppresor genes and down-regulates their transcription. Symmetric dimethylation on Arg-4 by the PRDM1/PRMT5 complex may play a crucial role in the germ-cell lineage. Post-translationally, glutamine methylation at Gln-105 (H2AQ104me) by FBL is specifically dedicated to polymerase I. It is present at 35S ribosomal DNA locus and impairs binding of the FACT complex. In terms of processing, crotonylation (Kcr) is specifically present in male germ cells and marks testis-specific genes in post-meiotic cells, including X-linked genes that escape sex chromosome inactivation in haploid cells. Crotonylation marks active promoters and enhancers and confers resistance to transcriptional repressors. It is also associated with post-meiotically activated genes on autosomes. Lactylated in macrophages by EP300/P300 by using lactoyl-CoA directly derived from endogenous or exogenous lactate, leading to stimulates gene transcription.

It localises to the nucleus. The protein resides in the chromosome. Functionally, core component of nucleosome. Nucleosomes wrap and compact DNA into chromatin, limiting DNA accessibility to the cellular machineries which require DNA as a template. Histones thereby play a central role in transcription regulation, DNA repair, DNA replication and chromosomal stability. DNA accessibility is regulated via a complex set of post-translational modifications of histones, also called histone code, and nucleosome remodeling. This chain is Histone H2A type 2-B, found in Homo sapiens (Human).